The chain runs to 145 residues: UPF0735 ACT domain-containing protein CLH_2637 (145 aa).

The ACT domain maps to 69 to 144 (TFNLIVKDQT…YVEKIEFVAM (76 aa)).

The protein belongs to the UPF0735 family.

This is UPF0735 ACT domain-containing protein CLH_2637 from Clostridium botulinum (strain Alaska E43 / Type E3).